Reading from the N-terminus, the 370-residue chain is Flagellar P-ring protein (370 aa).

Positions 1 to 28 (MTFFTRCFRRGALLFLLAVLLLPSPAQA) are cleaved as a signal peptide.

This sequence belongs to the FlgI family. In terms of assembly, the basal body constitutes a major portion of the flagellar organelle and consists of four rings (L,P,S, and M) mounted on a central rod.

The protein localises to the periplasm. It localises to the bacterial flagellum basal body. Functionally, assembles around the rod to form the L-ring and probably protects the motor/basal body from shearing forces during rotation. In Oleidesulfovibrio alaskensis (strain ATCC BAA-1058 / DSM 17464 / G20) (Desulfovibrio alaskensis), this protein is Flagellar P-ring protein.